Consider the following 119-residue polypeptide: UPF0102 protein Sare_1228 (119 aa).

The protein belongs to the UPF0102 family.

This Salinispora arenicola (strain CNS-205) protein is UPF0102 protein Sare_1228.